The following is a 301-amino-acid chain: Lysozyme-like protein 3 (301 aa).

The signal sequence occupies residues 1 to 15; the sequence is MKLFALLVSITLCYS. In terms of domain architecture, Ch-type lysozyme spans 64 to 282; the sequence is HAYSVDISFH…HLSQIVHFST (219 aa).

Belongs to the glycosyl hydrolase 25 family.

Functionally, plays a role in the stress response to heavy metals such as copper, probably in a kgb-1-dependent manner. This is Lysozyme-like protein 3 from Caenorhabditis elegans.